The primary structure comprises 728 residues: MSLSHVAPSHDAYGQAKRRKVRKGTHSCWECKRRKMKCRFDPRIASACNGCRRRGSPCISQEFPEDLEEAVMNIGTTSSDGTPFDGRTRATTPSERTDQILTPVSTVREPSQYPRSPEQHLPTGNDTSQRKYERLSRFLHELLPSRADRESIFKASRHSSILSHELLTTPYITLHQNGLQTPESLLMTPQPNSHPVLIARYMLQFALFLQHLPPDLYKEIQGLSEPPRATMERLADAAIYHVTTNEALINSIESLECIMLESLYQVNLGNLRRSWVAGRRAMSLAQFMGFHRPDNQTRYYKALDPKTNYDPQIMWLRIIILDRQLCLLLGLPEGCTDHTMASSETRIANNCPMGRLEQLHCVAMSRILDRNASQPSGRDLTATRAIDLELQKAAGSLPSKWWLAPKLDSASTDLQAMFWDTRRLVLQICHYNLLNQLHLPYMLRPSTAGNKYEYSRITCVNASREVLSRYNSLRSFNRIAYSCRTVDFLALMAAMALLLAHMDSYRDGAENLLANQYLSDRGMIEQVQEHMSEINRLNSDELSAQSADLLKSLLAIDLEKGKGRVSVREAGSEGMLPQDGMGPEEESVVRVHIPYFGIIRIAREKQHATTASKPPVDRSPSSNSDAQLRFSTLTHPSNALPLSPNTTSNPLSFAVADAAAPHEFTTPFAHQQQQPCQPTFSNPGLSLTPSPLMQGGYPDLAAGSEDWAFQRVDMAFFESIMRNVGGDL.

A DNA-binding region (zn(2)-C6 fungal-type) is located at residues 28–58 (CWECKRRKMKCRFDPRIASACNGCRRRGSPC). Disordered regions lie at residues 75 to 130 (GTTS…TSQR) and 606 to 626 (QHATTASKPPVDRSPSSNSDA). Residues 89-109 (RATTPSERTDQILTPVSTVRE) are compositionally biased toward polar residues.

Its subcellular location is the nucleus. In terms of biological role, transcription factor involved in regulation of the dehydrocurvularin biosynthesis gene cluster. This chain is Dehydrocurvularin biosynthesis regulator, found in Aspergillus terreus.